Here is a 60-residue protein sequence, read N- to C-terminus: Mastoparan-VT6 (60 aa).

Positions 1 to 27 (MKNTILILFTAFIALLGFFGMSAEALA) are cleaved as a signal peptide. AXPX repeat units lie at residues 27–30 (ADPK), 31–34 (ADPL), 35–38 (AGPN), and 41–44 (ADPE). The propeptide occupies 28-45 (DPKADPLAGPNPDADPEA). At Leu59 the chain carries Leucine amide.

This sequence belongs to the MCD family. Mastoparan subfamily. Expressed by the venom gland.

It is found in the secreted. Functionally, the synthetic peptide shows antimicrobial activities against Gram-negative bacteria (but not against all strains tested), Gram-positive bacteria (all strains tested) and the fungi C.albicans and C.parapsilosis. Exhibits little hemolytic activity against washed human erythrocytes. In Vespa tropica (Greater banded hornet), this protein is Mastoparan-VT6.